Consider the following 393-residue polypeptide: S-adenosylmethionine synthase (393 aa).

His-17 contributes to the ATP binding site. Asp-19 serves as a coordination point for Mg(2+). Glu-45 contributes to the K(+) binding site. L-methionine contacts are provided by Glu-58 and Gln-104. Residues 104–114 are flexible loop; the sequence is QSAEIAQGVEE. Residues 171–173, Asp-245, 251–252, Ala-268, and Lys-272 contribute to the ATP site; these read DAK and RK. Asp-245 provides a ligand contact to L-methionine. Position 276 (Lys-276) interacts with L-methionine.

This sequence belongs to the AdoMet synthase family. Homotetramer; dimer of dimers. It depends on Mg(2+) as a cofactor. Requires K(+) as cofactor.

The protein localises to the cytoplasm. The enzyme catalyses L-methionine + ATP + H2O = S-adenosyl-L-methionine + phosphate + diphosphate. The protein operates within amino-acid biosynthesis; S-adenosyl-L-methionine biosynthesis; S-adenosyl-L-methionine from L-methionine: step 1/1. In terms of biological role, catalyzes the formation of S-adenosylmethionine (AdoMet) from methionine and ATP. The overall synthetic reaction is composed of two sequential steps, AdoMet formation and the subsequent tripolyphosphate hydrolysis which occurs prior to release of AdoMet from the enzyme. This is S-adenosylmethionine synthase from Hyphomonas neptunium (strain ATCC 15444).